Consider the following 212-residue polypeptide: MQNRPIIIGVTGGSGGGKTSVSRAILSHFPDEKISMIEHDSYYKDQSHLTFEERVKTNYDHPFAFDTDLMIEQIKELLAGRPVDIPTYDYTEHTRSSKTYRQEPQDVFIVEGILVLEDKRLRDLMDIKIFVDTDDXVRIXRXIKRXMEXXGRSLDSVINQYLGVVKPMYHQFIESTKRYADIVIPEGVSNTVAIDLLTTKIAKILEEARNSK.

12–19 (GGSGGGKT) is a binding site for ATP.

It belongs to the uridine kinase family.

Its subcellular location is the cytoplasm. The catalysed reaction is uridine + ATP = UMP + ADP + H(+). It carries out the reaction cytidine + ATP = CMP + ADP + H(+). The protein operates within pyrimidine metabolism; CTP biosynthesis via salvage pathway; CTP from cytidine: step 1/3. Its pathway is pyrimidine metabolism; UMP biosynthesis via salvage pathway; UMP from uridine: step 1/1. This chain is Uridine kinase, found in Streptococcus pneumoniae serotype 19F (strain G54).